A 1104-amino-acid polypeptide reads, in one-letter code: Receptor-type guanylate cyclase gcy-15 (1104 aa).

Over Met-1–Thr-431 the chain is Extracellular. Residues Asn-43, Asn-237, Asn-263, Asn-287, Asn-407, and Asn-429 are each glycosylated (N-linked (GlcNAc...) asparagine). A helical membrane pass occupies residues Phe-432–Phe-452. At Leu-453 to Ser-1104 the chain is on the cytoplasmic side. Residues Phe-528–Thr-823 enclose the Protein kinase domain. Residues Ala-534–Ile-542 and Lys-576 contribute to the ATP site. A coiled-coil region spans residues Ile-838 to Leu-871. A Guanylate cyclase domain is found at Thr-894–Glu-1024.

This sequence belongs to the adenylyl cyclase class-4/guanylyl cyclase family. As to expression, expressed bilaterally in ASG sensory neurons.

Its subcellular location is the cell membrane. The enzyme catalyses GTP = 3',5'-cyclic GMP + diphosphate. In terms of biological role, guanylate cyclase involved in the production of the second messenger cGMP. In Caenorhabditis elegans, this protein is Receptor-type guanylate cyclase gcy-15.